The primary structure comprises 65 residues: MVSVQMNENESIDKLLKRFKKKYERAGVLKEFRKKAYFVKPSIDNRLKRSRCKRRAQRANEERNS.

Belongs to the bacterial ribosomal protein bS21 family.

In Chlorobaculum parvum (strain DSM 263 / NCIMB 8327) (Chlorobium vibrioforme subsp. thiosulfatophilum), this protein is Small ribosomal subunit protein bS21.